Consider the following 96-residue polypeptide: Ribonuclease P protein component 1 (96 aa).

The protein belongs to the eukaryotic/archaeal RNase P protein component 1 family. Consists of a catalytic RNA component and at least 4-5 protein subunits.

It localises to the cytoplasm. The catalysed reaction is Endonucleolytic cleavage of RNA, removing 5'-extranucleotides from tRNA precursor.. In terms of biological role, part of ribonuclease P, a protein complex that generates mature tRNA molecules by cleaving their 5'-ends. This Methanococcus aeolicus (strain ATCC BAA-1280 / DSM 17508 / OCM 812 / Nankai-3) protein is Ribonuclease P protein component 1.